The following is a 62-amino-acid chain: Teretoxin Tsu1.1 (62 aa).

Residues 1 to 21 form the signal peptide; that stretch reads MSCFPVLFVMMLLASQSVWAF. A propeptide spanning residues 22–40 is cleaved from the precursor; it reads PEPETRIGTARDAESMGVR.

Belongs to the teretoxin A (TA) superfamily. In terms of processing, contains 2 disulfide bonds. As to expression, expressed by the venom duct.

It is found in the secreted. The sequence is that of Teretoxin Tsu1.1 from Terebra subulata (Chocolate spotted auger).